Consider the following 198-residue polypeptide: Chromophore lyase CpcT/CpeT 3 (198 aa).

It belongs to the CpcT/CpeT biliprotein lyase family.

Covalently attaches a chromophore to Cys residue(s) of phycobiliproteins. This chain is Chromophore lyase CpcT/CpeT 3, found in Synechococcus sp. (strain JA-3-3Ab) (Cyanobacteria bacterium Yellowstone A-Prime).